A 485-amino-acid chain; its full sequence is Cobyric acid synthase (485 aa).

The 189-residue stretch at 249 to 437 folds into the GATase cobBQ-type domain; that stretch reads HLKIRVPVWQ…WHGLFSQPSA (189 aa). Cysteine 330 (nucleophile) is an active-site residue. Histidine 429 is a catalytic residue.

The protein belongs to the CobB/CobQ family. CobQ subfamily.

It participates in cofactor biosynthesis; adenosylcobalamin biosynthesis. In terms of biological role, catalyzes amidations at positions B, D, E, and G on adenosylcobyrinic A,C-diamide. NH(2) groups are provided by glutamine, and one molecule of ATP is hydrogenolyzed for each amidation. The polypeptide is Cobyric acid synthase (Saccharophagus degradans (strain 2-40 / ATCC 43961 / DSM 17024)).